The sequence spans 211 residues: Imidazole glycerol phosphate synthase subunit HisH (211 aa).

Residues 4–211 (TVALLDYGSG…QLLRNWINHI (208 aa)) enclose the Glutamine amidotransferase type-1 domain. Cys-82 functions as the Nucleophile in the catalytic mechanism. Catalysis depends on residues His-192 and Glu-194.

As to quaternary structure, heterodimer of HisH and HisF.

It is found in the cytoplasm. It carries out the reaction 5-[(5-phospho-1-deoxy-D-ribulos-1-ylimino)methylamino]-1-(5-phospho-beta-D-ribosyl)imidazole-4-carboxamide + L-glutamine = D-erythro-1-(imidazol-4-yl)glycerol 3-phosphate + 5-amino-1-(5-phospho-beta-D-ribosyl)imidazole-4-carboxamide + L-glutamate + H(+). The enzyme catalyses L-glutamine + H2O = L-glutamate + NH4(+). Its pathway is amino-acid biosynthesis; L-histidine biosynthesis; L-histidine from 5-phospho-alpha-D-ribose 1-diphosphate: step 5/9. IGPS catalyzes the conversion of PRFAR and glutamine to IGP, AICAR and glutamate. The HisH subunit catalyzes the hydrolysis of glutamine to glutamate and ammonia as part of the synthesis of IGP and AICAR. The resulting ammonia molecule is channeled to the active site of HisF. This Corynebacterium efficiens (strain DSM 44549 / YS-314 / AJ 12310 / JCM 11189 / NBRC 100395) protein is Imidazole glycerol phosphate synthase subunit HisH.